The sequence spans 1050 residues: Atrial natriuretic peptide receptor 2 (1050 aa).

The N-terminal stretch at 1 to 19 (MDLGHSLFVVFTCFLMARC) is a signal peptide. At 20-460 (RTEIGKNITV…FCNEDQLPVL (441 aa)) the chain is on the extracellular side. N-linked (GlcNAc...) asparagine glycans are attached at residues asparagine 26 and asparagine 74. The cysteines at positions 84 and 110 are disulfide-linked. Asparagine 169, asparagine 203, asparagine 285, asparagine 352, asparagine 366, and asparagine 415 each carry an N-linked (GlcNAc...) asparagine glycan. Residues cysteine 236 and cysteine 339 are joined by a disulfide bond. Residues 461–481 (GIVAVGSGLALIIFGISSFLI) traverse the membrane as a helical segment. Over 482-1050 (YRKLKLEKEL…LGEKTDVYVI (569 aa)) the chain is Cytoplasmic. The region spanning 517 to 790 (SRLTISQRGS…PDFSYIKIFV (274 aa)) is the Protein kinase domain. In terms of domain architecture, Guanylate cyclase spans 865–995 (TIYFSDIVGF…DTVNTASRME (131 aa)).

The protein belongs to the adenylyl cyclase class-4/guanylyl cyclase family. Post-translationally, phosphorylated. Phosphorylation of the protein kinase-like domain is required for full activation by CNP. Glycosylated. As to expression, high levels found in liver, atrium and gill. Moderate levels found in brain and ventricle, and low levels in esophageal sphincter, stomach, posterior intestine and kidney.

It is found in the cell membrane. The catalysed reaction is GTP = 3',5'-cyclic GMP + diphosphate. In terms of biological role, receptor for the C-type natriuretic peptide NPPC/CNP hormone. Has guanylate cyclase activity upon binding of its ligand. May play a role in the regulation of skeletal growth. The chain is Atrial natriuretic peptide receptor 2 (npr2) from Anguilla japonica (Japanese eel).